Consider the following 125-residue polypeptide: Steroid Delta-isomerase (125 aa).

Y14 acts as the Proton donor in catalysis. D38 serves as the catalytic Proton acceptor. D99 is a binding site for substrate.

Homodimer.

It carries out the reaction a 3-oxo-Delta(5)-steroid = a 3-oxo-Delta(4)-steroid. The sequence is that of Steroid Delta-isomerase (ksi) from Comamonas testosteroni (Pseudomonas testosteroni).